The following is a 106-amino-acid chain: Cytochrome c oxidase assembly factor 3 homolog, mitochondrial (106 aa).

The interval 1–34 (MASSGAGDPLDSKRGEAPFAQRIDPTREKLTPEQ) is disordered. At Ala2 the chain carries N-acetylalanine. Residues 2–57 (ASSGAGDPLDSKRGEAPFAQRIDPTREKLTPEQLHSMRQAELAQWQKVLPRRRTRN) are Mitochondrial matrix-facing. A helical membrane pass occupies residues 58–78 (IVTGLGIGALVLAIYGYTFYS). Residues 78–104 (SISQERFLDELEDEAKAARARALARAS) are a coiled coil. Over 79–106 (ISQERFLDELEDEAKAARARALARASGS) the chain is Mitochondrial intermembrane.

The protein belongs to the COA3 family. As to quaternary structure, along with COX14, core component of the MITRAC (mitochondrial translation regulation assembly intermediate of cytochrome c oxidase complex) complex. Interacts with MT-CO1/COX1, SMIM20, SURF1 and TIMM21.

The protein resides in the mitochondrion inner membrane. Its function is as follows. Core component of the MITRAC (mitochondrial translation regulation assembly intermediate of cytochrome c oxidase complex) complex, that regulates cytochrome c oxidase assembly. MITRAC complexes regulate both translation of mitochondrial encoded components and assembly of nuclear-encoded components imported in mitochondrion. Required for efficient translation of MT-CO1 and mitochondrial respiratory chain complex IV assembly. The chain is Cytochrome c oxidase assembly factor 3 homolog, mitochondrial (COA3) from Homo sapiens (Human).